Here is a 798-residue protein sequence, read N- to C-terminus: Heterogeneous nuclear ribonucleoprotein U (798 aa).

Serine 2 carries the N-acetylserine modification. A Phosphoserine modification is found at serine 4. In terms of domain architecture, SAP spans 8–42 (VKKLKVSELKEELKKRRLSDKGLKADLMDRLQAAL). N6-acetyllysine occurs at positions 17 and 21. The tract at residues 41 to 229 (ALDNEAGGRP…VKRPREDHGR (189 aa)) is disordered. Serine 58 carries the post-translational modification Phosphoserine. 2 stretches are compositionally biased toward low complexity: residues 71–80 (AGLEQEAAAG) and 103–113 (ENGAAGAADAG). Composition is skewed to acidic residues over residues 114–128 (AMEE…ENGD) and 134–147 (EGED…EGAG). A compositionally biased stretch (low complexity) spans 153-169 (GEQQSQPPAAAQQASQQ). Lysine 179 is subject to N6-acetyllysine. The residue at position 180 (serine 180) is an ADP-ribosylserine. A compositionally biased stretch (low complexity) spans 192–203 (APPGARQGQQQA). The span at 207-229 (GKTEQKAGDKKRGVKRPREDHGR) shows a compositional bias: basic and acidic residues. Residue arginine 229 is modified to Citrulline. Residue lysine 239 is modified to N6-acetyllysine; alternate. Residue lysine 239 forms a Glycyl lysine isopeptide (Lys-Gly) (interchain with G-Cter in SUMO1); alternate linkage. Lysine 239 is covalently cross-linked (Glycyl lysine isopeptide (Lys-Gly) (interchain with G-Cter in SUMO2); alternate). The residue at position 240 (tyrosine 240) is a Phosphotyrosine. Residues serine 241 and serine 245 each carry the phosphoserine modification. The region spanning 242–438 (RAKSPQPPVE…VEFNFGQKEK (197 aa)) is the B30.2/SPRY domain. Threonine 260 is subject to Phosphothreonine. N6-acetyllysine is present on lysine 326. Positions 462 to 646 (PKGPEEKKDC…QKLLEQYKEE (185 aa)) are ATPase domain. Lysine 469 participates in a covalent cross-link: Glycyl lysine isopeptide (Lys-Gly) (interchain with G-Cter in SUMO2). 478–485 (GLPGAGKT) provides a ligand contact to ATP. Residues lysine 490 and lysine 498 each carry the N6-acetyllysine; alternate modification. Glycyl lysine isopeptide (Lys-Gly) (interchain with G-Cter in SUMO2); alternate cross-links involve residues lysine 490 and lysine 498. Threonine 506 bears the Phosphothreonine mark. A Glycyl lysine isopeptide (Lys-Gly) (interchain with G-Cter in SUMO2) cross-link involves residue lysine 510. At lysine 525 the chain carries N6-acetyllysine. Lysine 539 carries the post-translational modification N6-acetyllysine; alternate. Lysine 539 participates in a covalent cross-link: Glycyl lysine isopeptide (Lys-Gly) (interchain with G-Cter in SUMO2); alternate. Lysine 548 participates in a covalent cross-link: Glycyl lysine isopeptide (Lys-Gly) (interchain with G-Cter in SUMO2). Threonine 556 bears the Phosphothreonine mark. Residues lysine 583 and lysine 600 each participate in a glycyl lysine isopeptide (Lys-Gly) (interchain with G-Cter in SUMO2) cross-link. An actin-binding region spans residues 585–600 (EDYKQRTQKKAEVEGK). Lysine 609 carries the N6-acetyllysine; alternate modification. Lysine 609 participates in a covalent cross-link: Glycyl lysine isopeptide (Lys-Gly) (interchain with G-Cter in SUMO2); alternate. Residues 624 to 651 (DEITYVELQKEEAQKLLEQYKEESKKAL) are a coiled coil. Residues lysine 638 and lysine 644 each participate in a glycyl lysine isopeptide (Lys-Gly) (interchain with G-Cter in SUMO2) cross-link. Residues 645-657 (EESKKALPPEKKQ) show a composition bias toward basic and acidic residues. Positions 645–727 (EESKKALPPE…GSGGIGYPYP (83 aa)) are disordered. Arginine 676 is subject to Omega-N-methylarginine. Gly residues predominate over residues 684–702 (GGFNMRGGNFRGGAPGNRG). The tract at residues 688 to 713 (MRGGNFRGGAPGNRGGYNRRGNMPQR) is RNA-binding RGG-box. Arginine 689, arginine 694, and arginine 701 each carry asymmetric dimethylarginine. An asymmetric dimethylarginine; alternate mark is found at arginine 707 and arginine 713. Omega-N-methylarginine; alternate is present on residues arginine 707 and arginine 713. Positions 713-723 (RGGGGGSGGIG) are enriched in gly residues. Residues arginine 728 and arginine 735 each carry the asymmetric dimethylarginine modification. The interval 743–772 (NYNRGGMPNRGNYNQNFRGRGNNRGYKNQS) is disordered. Lysine 787 carries the N6-acetyllysine; alternate modification. Residue lysine 787 forms a Glycyl lysine isopeptide (Lys-Gly) (interchain with G-Cter in SUMO2); alternate linkage.

As to quaternary structure, oligomer (via ATPase domain and RNA-binding RGG-box region); oligomerization occurs upon ATP-binding in a chromatin-associated RNAs (caRNAs)- and transcription-dependent manner and is required for chromatin decompaction. ATP hydrolysis is required to cycle from an oligomeric to monomeric state to compact chromatin. Component of the coding region determinant (CRD)-mediated complex, composed of DHX9, HNRNPU, IGF2BP1, SYNCRIP and YBX1. Identified in the spliceosome C complex. Identified in a IGF2BP1-dependent mRNP granule complex containing untranslated mRNAs. Associates with heterogeneous nuclear ribonucleoprotein (hnRNP) particles. Associates (via middle region) with the C-terminal domain (CTD) RNA polymerase II (Pol II) holoenzyme; this association occurs in a RNA-independent manner. Associates (via middle region) with the core-TFIIH basal transcription factor complex; this association inhibits the CTD phosphorylation of RNA polymerase II holoenzyme by down-regulating TFIIH kinase activity. Associates with the telomerase holoenzyme complex. Associates with spindle microtubules (MTs) in a TPX2-dependent manner. Interacts (via C-terminus) with actin; this interaction is direct and mediates association with the phosphorylated CTD of RNA polymerase II and is disrupted in presence of the long non-coding H19 RNA. Interacts with AURKA. Interacts (via C-terminus) with CBX5; this interaction is, at least in part, RNA-dependent. Interacts with CR2. Interacts with CRY1. Interacts (via C-terminus) with EP300; this interaction enhances DNA-binding to nuclear scaffold/matrix attachment region (S/MAR) elements. Interacts with ERBB4. Interacts with GEMIN5. Interacts with IGF2BP1. Interacts with IGF2BP2 and IGF2BP3. Interacts with NCL; this interaction occurs during mitosis. Interacts (via C-terminus) with NR3C1 (via C-terminus). Interacts with PLK1; this interaction induces phosphorylation of HNRNPU at Ser-58 in mitosis. Interacts with POU3F4. Interacts with SMARCA4; this interaction occurs in embryonic stem cells and stimulates global Pol II-mediated transcription. Interacts (via C-terminus) with TOP2A; this interaction protects the topoisomerase TOP2A from degradation and positively regulates the relaxation of supercoiled DNA by TOP2A in a RNA-dependent manner. Interacts with TPX2; this interaction recruits HNRNPU to spindle microtubules (MTs). Interacts with UBQLN2. Interacts (via RNA-binding RGG-box region) with ZBTB7B; the interaction facilitates the recruitment of long non-coding RNA Blnc1 by ZBTB7B. Interacts with ERCC6. Post-translationally, cleaved at Asp-94 by CASP3 during T-cell apoptosis, resulting in a loss of DNA- and chromatin-binding activities. Extensively phosphorylated. Phosphorylated on Ser-58 by PLK1 and dephosphorylated by protein phosphatase 2A (PP2A) in mitosis. In terms of processing, arg-707 and Arg-713 are dimethylated, probably to asymmetric dimethylarginine. Post-translationally, citrullinated by PADI4.

The protein resides in the nucleus. It localises to the nucleus matrix. Its subcellular location is the chromosome. It is found in the nucleus speckle. The protein localises to the cytoplasm. The protein resides in the cytoskeleton. It localises to the microtubule organizing center. Its subcellular location is the centrosome. It is found in the centromere. The protein localises to the kinetochore. The protein resides in the spindle. It localises to the spindle pole. Its subcellular location is the midbody. It is found in the cell surface. The protein localises to the cytoplasmic granule. Its function is as follows. DNA- and RNA-binding protein involved in several cellular processes such as nuclear chromatin organization, telomere-length regulation, transcription, mRNA alternative splicing and stability, Xist-mediated transcriptional silencing and mitotic cell progression. Plays a role in the regulation of interphase large-scale gene-rich chromatin organization through chromatin-associated RNAs (caRNAs) in a transcription-dependent manner, and thereby maintains genomic stability. Required for the localization of the long non-coding Xist RNA on the inactive chromosome X (Xi) and the subsequent initiation and maintenance of X-linked transcriptional gene silencing during X-inactivation. Required for the topoisomerase TOP2A protein stability and activity in a RNA-dependent manner. Plays a role as a RNA polymerase II (Pol II) holoenzyme transcription regulator. Promotes transcription initiation by direct association with the core-TFIIH basal transcription factor complex for the assembly of a functional pre-initiation complex with Pol II in a actin-dependent manner. Blocks Pol II transcription elongation activity by inhibiting the C-terminal domain (CTD) phosphorylation of Pol II and dissociates from Pol II pre-initiation complex prior to productive transcription elongation. Positively regulates CBX5-induced transcriptional gene silencing and retention of CBX5 in the nucleus. Negatively regulates glucocorticoid-mediated transcriptional activation. Key regulator of transcription initiation and elongation in embryonic stem cells upon leukemia inhibitory factor (LIF) signaling. Involved in the long non-coding RNA H19-mediated Pol II transcriptional repression. Participates in the circadian regulation of the core clock component BMAL1 transcription. Plays a role in the regulation of telomere length. Plays a role as a global pre-mRNA alternative splicing modulator by regulating U2 small nuclear ribonucleoprotein (snRNP) biogenesis. Plays a role in mRNA stability. Component of the CRD-mediated complex that promotes MYC mRNA stabilization. Enhances the expression of specific genes, such as tumor necrosis factor TNFA, by regulating mRNA stability, possibly through binding to the 3'-untranslated region (UTR). Plays a role in mitotic cell cycle regulation. Involved in the formation of stable mitotic spindle microtubules (MTs) attachment to kinetochore, spindle organization and chromosome congression. Phosphorylation at Ser-58 by PLK1 is required for chromosome alignement and segregation and progression through mitosis. Also contributes to the targeting of AURKA to mitotic spindle MTs. Binds to double- and single-stranded DNA and RNA, poly(A), poly(C) and poly(G) oligoribonucleotides. Binds to chromatin-associated RNAs (caRNAs). Associates with chromatin to scaffold/matrix attachment region (S/MAR) elements in DNA. Associates with chromatin in a chromatin-associated RNAs (caRNAs)-dependent manner. Binds to the Xist RNA. Binds the long non-coding H19 RNA. Binds to SMN1/2 pre-mRNAs at G/U-rich regions. Binds to small nuclear RNAs (snRNAs). Binds to the 3'-UTR of TNFA mRNA. Binds (via RNA-binding RGG-box region) to the long non-coding Xist RNA; this binding is direct and bridges the Xist RNA and the inactive chromosome X (Xi). Also negatively regulates embryonic stem cell differentiation upon LIF signaling. Required for embryonic development. Binds to brown fat long non-coding RNA 1 (Blnc1); facilitates the recruitment of Blnc1 by ZBTB7B required to drive brown and beige fat development and thermogenesis. This Rattus norvegicus (Rat) protein is Heterogeneous nuclear ribonucleoprotein U.